Consider the following 413-residue polypeptide: Serine hydroxymethyltransferase (413 aa).

(6S)-5,6,7,8-tetrahydrofolate contacts are provided by residues Leu117 and 121–123 (GHL). Lys226 carries the N6-(pyridoxal phosphate)lysine modification. Position 349 to 351 (349 to 351 (SPF)) interacts with (6S)-5,6,7,8-tetrahydrofolate.

This sequence belongs to the SHMT family. As to quaternary structure, homodimer. It depends on pyridoxal 5'-phosphate as a cofactor.

Its subcellular location is the cytoplasm. It catalyses the reaction (6R)-5,10-methylene-5,6,7,8-tetrahydrofolate + glycine + H2O = (6S)-5,6,7,8-tetrahydrofolate + L-serine. Its pathway is one-carbon metabolism; tetrahydrofolate interconversion. The protein operates within amino-acid biosynthesis; glycine biosynthesis; glycine from L-serine: step 1/1. In terms of biological role, catalyzes the reversible interconversion of serine and glycine with tetrahydrofolate (THF) serving as the one-carbon carrier. This reaction serves as the major source of one-carbon groups required for the biosynthesis of purines, thymidylate, methionine, and other important biomolecules. Also exhibits THF-independent aldolase activity toward beta-hydroxyamino acids, producing glycine and aldehydes, via a retro-aldol mechanism. The sequence is that of Serine hydroxymethyltransferase from Listeria monocytogenes serovar 1/2a (strain ATCC BAA-679 / EGD-e).